A 248-amino-acid polypeptide reads, in one-letter code: DNA polymerase sliding clamp 2 (248 aa).

Belongs to the PCNA family. Homotrimer. The subunits circularize to form a toroid; DNA passes through its center. Replication factor C (RFC) is required to load the toroid on the DNA.

In terms of biological role, sliding clamp subunit that acts as a moving platform for DNA processing. Responsible for tethering the catalytic subunit of DNA polymerase and other proteins to DNA during high-speed replication. This chain is DNA polymerase sliding clamp 2, found in Sulfurisphaera ohwakuensis.